The chain runs to 138 residues: Ribosomal RNA large subunit methyltransferase H (138 aa).

S-adenosyl-L-methionine is bound by residues Leu-57, Gly-86, and 105-110 (LSPLTF).

Belongs to the RNA methyltransferase RlmH family. In terms of assembly, homodimer.

The protein localises to the cytoplasm. The catalysed reaction is pseudouridine(1915) in 23S rRNA + S-adenosyl-L-methionine = N(3)-methylpseudouridine(1915) in 23S rRNA + S-adenosyl-L-homocysteine + H(+). In terms of biological role, specifically methylates the pseudouridine at position 1915 (m3Psi1915) in 23S rRNA. This chain is Ribosomal RNA large subunit methyltransferase H, found in Prochlorococcus marinus (strain MIT 9312).